Reading from the N-terminus, the 294-residue chain is Acetylglutamate kinase (294 aa).

Substrate-binding positions include 63-64 (GG), R85, and N188.

This sequence belongs to the acetylglutamate kinase family. ArgB subfamily.

It is found in the cytoplasm. The catalysed reaction is N-acetyl-L-glutamate + ATP = N-acetyl-L-glutamyl 5-phosphate + ADP. It functions in the pathway amino-acid biosynthesis; L-arginine biosynthesis; N(2)-acetyl-L-ornithine from L-glutamate: step 2/4. Functionally, catalyzes the ATP-dependent phosphorylation of N-acetyl-L-glutamate. The polypeptide is Acetylglutamate kinase (Methanococcus maripaludis (strain C6 / ATCC BAA-1332)).